The chain runs to 613 residues: ATP-dependent zinc metalloprotease FtsH (613 aa).

The Cytoplasmic segment spans residues 1 to 4 (MVKN). Residues 5 to 25 (LIFWLVITVVLMSVFQNFNSS) form a helical membrane-spanning segment. Residues 26 to 98 (DTSNHRVDYS…VGEIPEEPSL (73 aa)) lie on the Extracellular side of the membrane. The chain crosses the membrane as a helical span at residues 99 to 119 (LISIFISWFPMLLLIGVWIFF). Residues 120 to 613 (MRQMQMGGGK…WLEVDQKKDI (494 aa)) are Cytoplasmic-facing. Residue 192–199 (GPPGTGKT) coordinates ATP. H414 provides a ligand contact to Zn(2+). E415 is a catalytic residue. H418 and D492 together coordinate Zn(2+).

It in the central section; belongs to the AAA ATPase family. In the C-terminal section; belongs to the peptidase M41 family. Homohexamer. Requires Zn(2+) as cofactor.

The protein resides in the cell membrane. Its function is as follows. Acts as a processive, ATP-dependent zinc metallopeptidase for both cytoplasmic and membrane proteins. Plays a role in the quality control of integral membrane proteins. The protein is ATP-dependent zinc metalloprotease FtsH of Buchnera aphidicola subsp. Schizaphis graminum (strain Sg).